The sequence spans 390 residues: Elongation factor Tu 2 (390 aa).

The tr-type G domain occupies 10–201 (KPHVNVGTIG…LDEYVAVPPR (192 aa)). The G1 stretch occupies residues 19–26 (GHVDHGKT). 19–26 (GHVDHGKT) serves as a coordination point for GTP. Thr26 is a Mg(2+) binding site. Residues 55 to 59 (GITIA) are G2. A G3 region spans residues 76–79 (DCPG). Residues 76–80 (DCPGH) and 131–134 (NKAD) contribute to the GTP site. The segment at 131 to 134 (NKAD) is G4. The interval 168 to 170 (SAL) is G5.

Belongs to the TRAFAC class translation factor GTPase superfamily. Classic translation factor GTPase family. EF-Tu/EF-1A subfamily. Monomer.

It is found in the cytoplasm. The catalysed reaction is GTP + H2O = GDP + phosphate + H(+). Functionally, GTP hydrolase that promotes the GTP-dependent binding of aminoacyl-tRNA to the A-site of ribosomes during protein biosynthesis. This is Elongation factor Tu 2 from Wolbachia pipientis wMel.